The following is a 118-amino-acid chain: HTH-type transcriptional regulator CmtR (118 aa).

Residues 3 to 97 (TCEMRESALA…ELVQVVLAVD (95 aa)) enclose the HTH arsR-type domain. Residues Cys57, Cys61, and Cys102 each contribute to the Cd(2+) site.

As to quaternary structure, homodimer.

Its function is as follows. Metal-responsive transcriptional repressor for the cmt operon. Binding of cadmium or lead causes the repressor to dissociate from the DNA. The chain is HTH-type transcriptional regulator CmtR (cmtR) from Mycobacterium bovis (strain ATCC BAA-935 / AF2122/97).